The chain runs to 328 residues: Ribosomal RNA small subunit methyltransferase H (328 aa).

Residues Gly37–His39, Asp57, Phe83, Asp104, and Gln111 contribute to the S-adenosyl-L-methionine site.

This sequence belongs to the methyltransferase superfamily. RsmH family.

The protein resides in the cytoplasm. It carries out the reaction cytidine(1402) in 16S rRNA + S-adenosyl-L-methionine = N(4)-methylcytidine(1402) in 16S rRNA + S-adenosyl-L-homocysteine + H(+). Functionally, specifically methylates the N4 position of cytidine in position 1402 (C1402) of 16S rRNA. This is Ribosomal RNA small subunit methyltransferase H from Neisseria meningitidis serogroup A / serotype 4A (strain DSM 15465 / Z2491).